The chain runs to 562 residues: Formate--tetrahydrofolate ligase (562 aa).

Residue 71-78 (TPAGEGKS) participates in ATP binding.

This sequence belongs to the formate--tetrahydrofolate ligase family.

It carries out the reaction (6S)-5,6,7,8-tetrahydrofolate + formate + ATP = (6R)-10-formyltetrahydrofolate + ADP + phosphate. Its pathway is one-carbon metabolism; tetrahydrofolate interconversion. This chain is Formate--tetrahydrofolate ligase, found in Bacillus cereus (strain Q1).